Consider the following 129-residue polypeptide: ATP synthase epsilon chain (129 aa).

Belongs to the ATPase epsilon chain family. As to quaternary structure, F-type ATPases have 2 components, CF(1) - the catalytic core - and CF(0) - the membrane proton channel. CF(1) has five subunits: alpha(3), beta(3), gamma(1), delta(1), epsilon(1). CF(0) has three main subunits: a, b and c.

It localises to the cell inner membrane. In terms of biological role, produces ATP from ADP in the presence of a proton gradient across the membrane. The polypeptide is ATP synthase epsilon chain (Campylobacter jejuni subsp. jejuni serotype O:2 (strain ATCC 700819 / NCTC 11168)).